We begin with the raw amino-acid sequence, 166 residues long: Antibacterial peptide PMAP-36 (166 aa).

Positions 1–29 are cleaved as a signal peptide; that stretch reads METQRASLCLGRWSLWLLLLGLVVPSASA. A propeptide spanning residues 30 to 129 is cleaved from the precursor; that stretch reads QALSYREAVL…LDINCDEIQS (100 aa). Intrachain disulfides connect Cys-85-Cys-96 and Cys-107-Cys-124.

This sequence belongs to the cathelicidin family.

The protein resides in the secreted. Functionally, exerts antimicrobial activity against both Gram-positive and negative bacteria. Its activity appears to be mediated by its ability to damage bacterial membranes. This chain is Antibacterial peptide PMAP-36 (PMAP36), found in Sus scrofa (Pig).